Reading from the N-terminus, the 273-residue chain is Ribosomal RNA small subunit methyltransferase A (273 aa).

6 residues coordinate S-adenosyl-L-methionine: Asn23, Ile25, Gly50, Glu72, Asp97, and Asn116.

This sequence belongs to the class I-like SAM-binding methyltransferase superfamily. rRNA adenine N(6)-methyltransferase family. RsmA subfamily.

The protein localises to the cytoplasm. The enzyme catalyses adenosine(1518)/adenosine(1519) in 16S rRNA + 4 S-adenosyl-L-methionine = N(6)-dimethyladenosine(1518)/N(6)-dimethyladenosine(1519) in 16S rRNA + 4 S-adenosyl-L-homocysteine + 4 H(+). Functionally, specifically dimethylates two adjacent adenosines (A1518 and A1519) in the loop of a conserved hairpin near the 3'-end of 16S rRNA in the 30S particle. May play a critical role in biogenesis of 30S subunits. The chain is Ribosomal RNA small subunit methyltransferase A from Rickettsia akari (strain Hartford).